Reading from the N-terminus, the 172-residue chain is Inorganic pyrophosphatase (172 aa).

Residues K26, R40, and Y52 each contribute to the substrate site. Residues D62, D67, and D99 each coordinate Mg(2+). Y138 provides a ligand contact to substrate.

The protein belongs to the PPase family. As to quaternary structure, homohexamer. Mg(2+) serves as cofactor.

Its subcellular location is the cytoplasm. The enzyme catalyses diphosphate + H2O = 2 phosphate + H(+). Its function is as follows. Catalyzes the hydrolysis of inorganic pyrophosphate (PPi) forming two phosphate ions. This chain is Inorganic pyrophosphatase, found in Saccharolobus solfataricus (strain ATCC 35092 / DSM 1617 / JCM 11322 / P2) (Sulfolobus solfataricus).